A 110-amino-acid chain; its full sequence is Antimicrobial peptide microplusin (110 aa).

Residues 1–20 form the signal peptide; sequence MKAIFVSALLVVALVASTSA. 3 cysteine pairs are disulfide-bonded: Cys26–Cys72, Cys39–Cys100, and Cys61–Cys66.

As to expression, expressed in the hemocytes, fat body and ovaries.

It is found in the secreted. Has bacteriostatic activity against the Gram-positive bacterium M.luteus, but not against Gram-negative bacterium E.coli SBS363. Has fungistatic activity against C.neoformans, but not C.albicans. Binds and sequesters copper and iron ions. Copper-chelating is crucial for antimicrobial activity against M.luteus. The chain is Antimicrobial peptide microplusin from Rhipicephalus microplus (Cattle tick).